Reading from the N-terminus, the 1105-residue chain is Lysylphosphatidylglycerol biosynthesis bifunctional protein LysX (1105 aa).

The segment at Met1 to Asp603 is phosphatidylglycerol lysyltransferase. 7 consecutive transmembrane segments (helical) span residues Val20–Ile40, Phe62–Ala82, Ile86–Ile106, Phe117–Tyr137, Ala154–Phe174, Tyr186–Thr203, and Val208–Val228. Positions Val604–His1105 are lysine--tRNA ligase. Mg(2+) is bound by residues Asp1017 and Glu1024.

It in the N-terminal section; belongs to the LPG synthetase family. In the C-terminal section; belongs to the class-II aminoacyl-tRNA synthetase family. It depends on Mg(2+) as a cofactor.

Its subcellular location is the cell membrane. The catalysed reaction is tRNA(Lys) + L-lysine + ATP = L-lysyl-tRNA(Lys) + AMP + diphosphate. It catalyses the reaction L-lysyl-tRNA(Lys) + a 1,2-diacyl-sn-glycero-3-phospho-(1'-sn-glycerol) = a 1,2-diacyl-sn-glycero-3-phospho-1'-(3'-O-L-lysyl)-sn-glycerol + tRNA(Lys). Functionally, catalyzes the production of L-lysyl-tRNA(Lys)transfer and the transfer of a lysyl group from L-lysyl-tRNA(Lys) to membrane-bound phosphatidylglycerol (PG), which produces lysylphosphatidylglycerol (LPG), one of the components of the bacterial membrane with a positive net charge. LPG synthesis contributes to the resistance to cationic antimicrobial peptides (CAMPs) and likely protects M.tuberculosis against the CAMPs produced by competiting microorganisms (bacteriocins). In fact, the modification of anionic phosphatidylglycerol with positively charged L-lysine results in repulsion of the peptides. This Mycobacterium marinum (strain ATCC BAA-535 / M) protein is Lysylphosphatidylglycerol biosynthesis bifunctional protein LysX (lysX).